We begin with the raw amino-acid sequence, 400 residues long: GTPase-binding protein rid1 (400 aa).

Polar residues predominate over residues 16–27 (LSSDGLSESVNS). Residues 16 to 47 (LSSDGLSESVNSSDREDSLSFQTPSTPSEDEM) are disordered. A GBD/FH3 domain is found at 39–400 (PSTPSEDEMP…PYKLVQTGST (362 aa)).

It is found in the cytoplasm. In Schizosaccharomyces pombe (strain 972 / ATCC 24843) (Fission yeast), this protein is GTPase-binding protein rid1 (rid1).